The chain runs to 439 residues: Acyl transferase 7 (439 aa).

Residues 1–25 form a disordered region; the sequence is MAAAAPDKAVERLSQKLVHPSSPTP. Residues His176 and Asp383 each act as proton acceptor in the active site.

It belongs to the plant acyltransferase family.

Involved in the incorporation of ferulate into the cell wall. May act as arabinoxylan feruloyl transferase. The polypeptide is Acyl transferase 7 (Oryza sativa subsp. japonica (Rice)).